The sequence spans 130 residues: Aspartate 1-decarboxylase (130 aa).

The Schiff-base intermediate with substrate; via pyruvic acid role is filled by serine 25. Pyruvic acid (Ser) is present on serine 25. Threonine 57 serves as a coordination point for substrate. The Proton donor role is filled by tyrosine 58. 73 to 75 is a binding site for substrate; that stretch reads GAA.

Belongs to the PanD family. In terms of assembly, heterooctamer of four alpha and four beta subunits. Requires pyruvate as cofactor. Is synthesized initially as an inactive proenzyme, which is activated by self-cleavage at a specific serine bond to produce a beta-subunit with a hydroxyl group at its C-terminus and an alpha-subunit with a pyruvoyl group at its N-terminus.

It localises to the cytoplasm. The catalysed reaction is L-aspartate + H(+) = beta-alanine + CO2. It participates in cofactor biosynthesis; (R)-pantothenate biosynthesis; beta-alanine from L-aspartate: step 1/1. In terms of biological role, catalyzes the pyruvoyl-dependent decarboxylation of aspartate to produce beta-alanine. This Myxococcus xanthus (strain DK1622) protein is Aspartate 1-decarboxylase.